The primary structure comprises 267 residues: 2-keto-3-deoxy-L-rhamnonate aldolase (267 aa).

His-49 (proton acceptor) is an active-site residue. Substrate is bound at residue Gln-151. Glu-153 contributes to the Mg(2+) binding site. Substrate-binding residues include Ala-178 and Asp-179. Residue Asp-179 coordinates Mg(2+).

It belongs to the HpcH/HpaI aldolase family. KDR aldolase subfamily. In terms of assembly, homohexamer. Mg(2+) is required as a cofactor.

It catalyses the reaction 2-dehydro-3-deoxy-L-rhamnonate = (S)-lactaldehyde + pyruvate. In terms of biological role, catalyzes the reversible retro-aldol cleavage of 2-keto-3-deoxy-L-rhamnonate (KDR) to pyruvate and lactaldehyde. In Shigella boydii serotype 4 (strain Sb227), this protein is 2-keto-3-deoxy-L-rhamnonate aldolase.